The chain runs to 344 residues: Dihydroorotase (344 aa).

Zn(2+) contacts are provided by His13 and His15. Substrate contacts are provided by residues 15–17 (HFR) and Asn41. Residues Lys98, His135, and His173 each contribute to the Zn(2+) site. Lys98 is subject to N6-carboxylysine. His135 contributes to the substrate binding site. Substrate is bound at residue Leu218. A Zn(2+)-binding site is contributed by Asp246. Asp246 is a catalytic residue. Positions 250 and 262 each coordinate substrate.

Belongs to the metallo-dependent hydrolases superfamily. DHOase family. Class II DHOase subfamily. As to quaternary structure, homodimer. Zn(2+) serves as cofactor.

The enzyme catalyses (S)-dihydroorotate + H2O = N-carbamoyl-L-aspartate + H(+). The protein operates within pyrimidine metabolism; UMP biosynthesis via de novo pathway; (S)-dihydroorotate from bicarbonate: step 3/3. Its function is as follows. Catalyzes the reversible cyclization of carbamoyl aspartate to dihydroorotate. The polypeptide is Dihydroorotase (Pseudoalteromonas atlantica (strain T6c / ATCC BAA-1087)).